The sequence spans 155 residues: MLLVAFKDPRITRIAKVNLIGGQAKPGPQLASIGINMGEFTKQFNDQTKDKNGEVIPCIITAFKDKSFTFEIKTTPVTMLLKKAANIKVGAKNSKTETVATISREKALEIAKTKLVDTNANDEEAVLRMVAGSAKQMGIKIEGVDPVVHKDGKKK.

This sequence belongs to the universal ribosomal protein uL11 family. In terms of assembly, part of the ribosomal stalk of the 50S ribosomal subunit. Interacts with L10 and the large rRNA to form the base of the stalk. L10 forms an elongated spine to which L12 dimers bind in a sequential fashion forming a multimeric L10(L12)X complex. Post-translationally, one or more lysine residues are methylated.

Its function is as follows. Forms part of the ribosomal stalk which helps the ribosome interact with GTP-bound translation factors. This is Large ribosomal subunit protein uL11 from Malacoplasma penetrans (strain HF-2) (Mycoplasma penetrans).